We begin with the raw amino-acid sequence, 236 residues long: Ubiquinone biosynthesis O-methyltransferase (236 aa).

S-adenosyl-L-methionine-binding residues include R39, G59, D80, and M124.

It belongs to the methyltransferase superfamily. UbiG/COQ3 family.

The enzyme catalyses a 3-demethylubiquinol + S-adenosyl-L-methionine = a ubiquinol + S-adenosyl-L-homocysteine + H(+). It catalyses the reaction a 3-(all-trans-polyprenyl)benzene-1,2-diol + S-adenosyl-L-methionine = a 2-methoxy-6-(all-trans-polyprenyl)phenol + S-adenosyl-L-homocysteine + H(+). Its pathway is cofactor biosynthesis; ubiquinone biosynthesis. O-methyltransferase that catalyzes the 2 O-methylation steps in the ubiquinone biosynthetic pathway. This is Ubiquinone biosynthesis O-methyltransferase from Shewanella sp. (strain MR-7).